We begin with the raw amino-acid sequence, 184 residues long: Major urinary protein 3 (184 aa).

An N-terminal signal peptide occupies residues 1–22 (MKLLLPLLLLLCLELTLVCIHA). N-linked (GlcNAc...) asparagine glycosylation is present at Asn66. A disulfide bridge links Cys86 with Cys179.

It belongs to the calycin superfamily. Lipocalin family. In terms of processing, glycosylated. As to expression, abundant in the urine of adult male mice but absent from that of females.

The protein resides in the secreted. Functionally, binds pheromones that are released from drying urine of males. These pheromones affect the sexual behavior of females. This Mus musculus (Mouse) protein is Major urinary protein 3 (Mup3).